The sequence spans 271 residues: Thiazole synthase (271 aa).

Catalysis depends on Lys-104, which acts as the Schiff-base intermediate with DXP. 1-deoxy-D-xylulose 5-phosphate contacts are provided by residues Gly-165, 192 to 193, and 214 to 215; these read AG and NT.

It belongs to the ThiG family. Homotetramer. Forms heterodimers with either ThiH or ThiS.

The protein resides in the cytoplasm. The enzyme catalyses [ThiS sulfur-carrier protein]-C-terminal-Gly-aminoethanethioate + 2-iminoacetate + 1-deoxy-D-xylulose 5-phosphate = [ThiS sulfur-carrier protein]-C-terminal Gly-Gly + 2-[(2R,5Z)-2-carboxy-4-methylthiazol-5(2H)-ylidene]ethyl phosphate + 2 H2O + H(+). Its pathway is cofactor biosynthesis; thiamine diphosphate biosynthesis. Its function is as follows. Catalyzes the rearrangement of 1-deoxy-D-xylulose 5-phosphate (DXP) to produce the thiazole phosphate moiety of thiamine. Sulfur is provided by the thiocarboxylate moiety of the carrier protein ThiS. In vitro, sulfur can be provided by H(2)S. The chain is Thiazole synthase from Burkholderia mallei (strain ATCC 23344).